A 469-amino-acid polypeptide reads, in one-letter code: Adenosylhomocysteinase (469 aa).

Substrate-binding residues include threonine 63, aspartate 139, and glutamate 164. 165-167 (TTT) is a binding site for NAD(+). Substrate-binding residues include lysine 194 and aspartate 198. Residues asparagine 199, 228–233 (GYGDVG), glutamate 251, asparagine 300, 321–323 (IGH), and asparagine 375 each bind NAD(+).

It belongs to the adenosylhomocysteinase family. The cofactor is NAD(+).

The protein resides in the cytoplasm. It carries out the reaction S-adenosyl-L-homocysteine + H2O = L-homocysteine + adenosine. It functions in the pathway amino-acid biosynthesis; L-homocysteine biosynthesis; L-homocysteine from S-adenosyl-L-homocysteine: step 1/1. Its function is as follows. May play a key role in the regulation of the intracellular concentration of adenosylhomocysteine. The chain is Adenosylhomocysteinase from Pseudomonas entomophila (strain L48).